The sequence spans 201 residues: Histidinol dehydrogenase (201 aa).

The protein belongs to the histidinol dehydrogenase family. As to quaternary structure, homodimer. Zn(2+) is required as a cofactor.

It carries out the reaction L-histidinol + 2 NAD(+) + H2O = L-histidine + 2 NADH + 3 H(+). Its pathway is amino-acid biosynthesis; L-histidine biosynthesis; L-histidine from 5-phospho-alpha-D-ribose 1-diphosphate: step 9/9. In terms of biological role, catalyzes the sequential NAD-dependent oxidations of L-histidinol to L-histidinaldehyde and then to L-histidine. This Buchnera aphidicola subsp. Schlechtendalia chinensis protein is Histidinol dehydrogenase (hisD).